Consider the following 447-residue polypeptide: Argininosuccinate synthase (447 aa).

ATP contacts are provided by residues A17–S25 and A43. Y99 contributes to the L-citrulline binding site. Residues G129 and T131 each coordinate ATP. T131, N135, and D136 together coordinate L-aspartate. Residue N135 participates in L-citrulline binding. D136 contributes to the ATP binding site. Residues R139 and S192 each coordinate L-citrulline. Residue D194 coordinates ATP. Positions 201, 203, and 280 each coordinate L-citrulline.

It belongs to the argininosuccinate synthase family. Type 2 subfamily. Homotetramer.

It localises to the cytoplasm. The catalysed reaction is L-citrulline + L-aspartate + ATP = 2-(N(omega)-L-arginino)succinate + AMP + diphosphate + H(+). It participates in amino-acid biosynthesis; L-arginine biosynthesis; L-arginine from L-ornithine and carbamoyl phosphate: step 2/3. This chain is Argininosuccinate synthase, found in Escherichia coli O139:H28 (strain E24377A / ETEC).